Here is a 124-residue protein sequence, read N- to C-terminus: Large ribosomal subunit protein eL22 (124 aa).

The protein belongs to the eukaryotic ribosomal protein eL22 family. As to quaternary structure, component of the large ribosomal subunit. Mature ribosomes consist of a small (40S) and a large (60S) subunit. The 40S subunit contains about 32 different proteins and 1 molecule of RNA (18S). The 60S subunit contains 45 different proteins and 3 molecules of RNA (25S, 5.8S and 5S).

The protein resides in the cytoplasm. Functionally, component of the ribosome, a large ribonucleoprotein complex responsible for the synthesis of proteins in the cell. The small ribosomal subunit (SSU) binds messenger RNAs (mRNAs) and translates the encoded message by selecting cognate aminoacyl-transfer RNA (tRNA) molecules. The large subunit (LSU) contains the ribosomal catalytic site termed the peptidyl transferase center (PTC), which catalyzes the formation of peptide bonds, thereby polymerizing the amino acids delivered by tRNAs into a polypeptide chain. The nascent polypeptides leave the ribosome through a tunnel in the LSU and interact with protein factors that function in enzymatic processing, targeting, and the membrane insertion of nascent chains at the exit of the ribosomal tunnel. The chain is Large ribosomal subunit protein eL22 from Candida albicans (strain SC5314 / ATCC MYA-2876) (Yeast).